A 368-amino-acid chain; its full sequence is WD repeat-containing protein RUP2 (368 aa).

WD repeat units lie at residues 38–77, 97–138, 141–184, 192–232, 236–276, 279–318, and 330–368; these read SASD…RNNA, CTPA…PVFE, EHGG…EESV, ICRS…DPAL, GHTK…RTYE, VNNR…PVWV, and SDKR…KRKP.

As to quaternary structure, interacts with UVR8.

It localises to the nucleus. Its subcellular location is the cytoplasm. It is found in the cytosol. Its function is as follows. Functions in association with RUP1 as repressor of UV-B-induced photomorphogenesis mediated by UVR8 and HY5. Plays a crucial negative feedback regulatory role downstream of UVR8-COP1 to inhibit UVR8 function, balance UV-B-specific responses and ensure normal plant growth. Is involved in the regulation of photoperiodic flowering and vegetative development. May act as negative regulator of photoperiodic flowering by suppressing flowering through the action of CONSTANS (CO) and FLOWERING LOCUS T (FT). The polypeptide is WD repeat-containing protein RUP2 (RUP2) (Arabidopsis thaliana (Mouse-ear cress)).